Reading from the N-terminus, the 146-residue chain is Hemoglobin subunit beta (146 aa).

N-acetylvaline is present on V1. The Globin domain maps to 2 to 146; the sequence is HLTNEEKTAV…VATALAHKYH (145 aa). The residue at position 44 (S44) is a Phosphoserine. An N6-acetyllysine modification is found at K59. H63 provides a ligand contact to heme b. Residue K82 is modified to N6-acetyllysine. H92 contributes to the heme b binding site. S-nitrosocysteine is present on C93. K144 carries the post-translational modification N6-acetyllysine.

It belongs to the globin family. As to quaternary structure, heterotetramer of two alpha chains and two beta chains. As to expression, red blood cells.

Functionally, involved in oxygen transport from the lung to the various peripheral tissues. The polypeptide is Hemoglobin subunit beta (HBB) (Lyroderma lyra (Greater Asian false-vampire bat)).